We begin with the raw amino-acid sequence, 429 residues long: Glycine betaine monooxygenase oxygenase subunit (429 aa).

In terms of domain architecture, Rieske spans 56 to 163; that stretch reads WLIAGMTCEI…VKTAGGYIFI (108 aa). 4 residues coordinate [2Fe-2S] cluster: Cys98, His100, Cys118, and His121. Fe cation-binding residues include His217 and His222.

Belongs to the bacterial ring-hydroxylating dioxygenase alpha subunit family. As to quaternary structure, the system is composed of an oxygenase subunit (GbcA) and a reductase subunit (GbcB). Requires [2Fe-2S] cluster as cofactor. Fe cation serves as cofactor.

The catalysed reaction is glycine betaine + NADH + O2 + H(+) = N,N-dimethylglycine + formaldehyde + NAD(+) + H2O. In terms of biological role, involved in degradation of glycine betaine. Part of a Rieske-type oxygenase system that catalyzes the conversion of glycine betaine (GB) to dimethylglycine (DMG). This subunit is the terminal oxygenase component of the system. This is Glycine betaine monooxygenase oxygenase subunit from Pseudomonas aeruginosa (strain UCBPP-PA14).